Here is a 391-residue protein sequence, read N- to C-terminus: Ammonium transporter Amt1 (391 aa).

At 1–7 (MSDGNVA) the chain is on the extracellular side. Residues 8–27 (WILASTALVMLMVPGVGFFY) form a helical membrane-spanning segment. Residues 28-38 (AGMVRRKNAVN) are Cytoplasmic-facing. A helical transmembrane segment spans residues 39–57 (MIALSFISLIITVLLWIFY). The Extracellular segment spans residues 58–89 (GYSVSFGNDISGIIGGLNYALLSGVKGEDLLF). A helical transmembrane segment spans residues 90-106 (MMYQMMFAAVTIAILTS). At 107–113 (AIAERAK) the chain is on the cytoplasmic side. Residues 114-137 (VSSFILLSALWLTFVYAPFAHWLW) form a helical membrane-spanning segment. Residues 138–152 (GGGWLAKLGALDFAG) lie on the Extracellular side of the membrane. A helical membrane pass occupies residues 153-170 (GMVVHISSGFAALAVAMT). At 171–188 (IGKRAGFEEYSIEPHSIP) the chain is on the cytoplasmic side. Residues 189 to 208 (LTLIGAALLWFGWFGFNGGS) form a helical membrane-spanning segment. Topologically, residues 209–217 (ALAANDVAI) are extracellular. The helical transmembrane segment at 218-237 (NAVVVTNTSAAVAGFVWMVI) threads the bilayer. The Cytoplasmic segment spans residues 238-245 (GWIKGKPG). A helical membrane pass occupies residues 246-263 (SLGIVSGAIAGLAAITPA). At 264–268 (AGFVD) the chain is on the extracellular side. Residues 269-287 (VKGAIVIGLVAGIVCYLAM) traverse the membrane as a helical segment. Residues 288-300 (DFRIKKKIDESLD) lie on the Cytoplasmic side of the membrane. The chain crosses the membrane as a helical span at residues 301–319 (AWAIHGIGGLWGSVAVGIL). The Extracellular portion of the chain corresponds to 320–337 (ANPEVNGYAGLLFGNPQL). Residues 338 to 363 (LVSQLIAVASTTAYAFLVTLILAKAV) traverse the membrane as a helical segment. Topologically, residues 364–391 (DAAVGLRVSSQEEYVGLDLSQHEEVAYT) are cytoplasmic.

Belongs to the ammonia transporter channel (TC 1.A.11.2) family. Homotrimer.

The protein localises to the cell membrane. Functionally, involved in the uptake of ammonium/ammonia (NH(4)(+)/NH(3)). Transport is electrogenic. Transport the ammonium and methylammonium cation with high specificity. The protein is Ammonium transporter Amt1 of Archaeoglobus fulgidus (strain ATCC 49558 / DSM 4304 / JCM 9628 / NBRC 100126 / VC-16).